The chain runs to 382 residues: MTEFWLISAPGEKTCQQTWEKLMAATTKNNNLSTNAKFNIPDLKVGTLDVLVGLSDELAKLDAFVEGTVKKVAQYMADVLEDSRDKVQENLLANGVDLVTYITRFQWDMAKYPIKQSLKNISEIIAKGVTQIDNDLKARASAYNNLKGNLQNLERKNAGSLITRSLAEIVKKDDFVLDSEYLITLLVVVPKNNYNDWVKQYETLAEMVVPRSSNVLSEDQDSYLCNVTLFRKAVDDFRHKARENKFVVRDFQYNEEEMKADKEEMNRLSTDKKKQFGPLVRWLKVNFSEAFIAWIHVKALRVFVESVLRYGLPVNFQAMLLQPNKKTMKKLREVLYDLYKHLDSSAASIIDAPMDIPGLNLSQQEYYPYVYYKIDCNLLEFK.

Threonine 2 carries the post-translational modification N-acetylthreonine.

It belongs to the V-ATPase C subunit family. In terms of assembly, V-ATPase is a heteromultimeric enzyme made up of two complexes: the ATP-hydrolytic V1 complex and the proton translocation V0 complex. The V1 complex consists of three catalytic AB heterodimers that form a heterohexamer, three peripheral stalks each consisting of EG heterodimers, one central rotor including subunits D and F, and the regulatory subunits C and H. The proton translocation complex V0 consists of the proton transport subunit a, a ring of proteolipid subunits c9c'', rotary subunit d, subunits e and f, and two accessory subunits.

Subunit of the V1 complex of vacuolar(H+)-ATPase (V-ATPase), a multisubunit enzyme composed of a peripheral complex (V1) that hydrolyzes ATP and a membrane integral complex (V0) that translocates protons. V-ATPase is responsible for acidifying and maintaining the pH of intracellular compartments and in some cell types, is targeted to the plasma membrane, where it is responsible for acidifying the extracellular environment. Subunit C is necessary for the assembly of the catalytic sector of the enzyme and is likely to have a specific function in its catalytic activity. The sequence is that of V-type proton ATPase subunit C 1 (atp6v1c1) from Xenopus tropicalis (Western clawed frog).